A 66-amino-acid polypeptide reads, in one-letter code: Large ribosomal subunit protein bL31 (66 aa).

4 residues coordinate Zn(2+): cysteine 16, cysteine 18, cysteine 36, and cysteine 39.

This sequence belongs to the bacterial ribosomal protein bL31 family. Type A subfamily. Part of the 50S ribosomal subunit. It depends on Zn(2+) as a cofactor.

Binds the 23S rRNA. The sequence is that of Large ribosomal subunit protein bL31 from Campylobacter curvus (strain 525.92).